The chain runs to 497 residues: Cytochrome P450 2D19 (497 aa).

Cys-443 serves as a coordination point for heme.

This sequence belongs to the cytochrome P450 family. It depends on heme as a cofactor.

The protein localises to the endoplasmic reticulum membrane. It localises to the microsome membrane. The enzyme catalyses an organic molecule + reduced [NADPH--hemoprotein reductase] + O2 = an alcohol + oxidized [NADPH--hemoprotein reductase] + H2O + H(+). Functionally, responsible for the metabolism of many drugs and environmental chemicals that it oxidizes. In Callithrix jacchus (White-tufted-ear marmoset), this protein is Cytochrome P450 2D19 (CYP2D19).